Reading from the N-terminus, the 546-residue chain is CTP synthase (546 aa).

The segment at 1–265 (MTKYVFVTGG…DEIVCHKLNI (265 aa)) is amidoligase domain. Residue serine 13 participates in CTP binding. Residue serine 13 participates in UTP binding. Residues 14–19 (SLGKGI) and aspartate 71 contribute to the ATP site. Mg(2+)-binding residues include aspartate 71 and glutamate 139. Residues 146–148 (DIE), 186–191 (KTKPTQ), and lysine 222 each bind CTP. Residues 186-191 (KTKPTQ) and lysine 222 contribute to the UTP site. Residues 290–543 (NIAFVGKYVD…VRAALAHQQK (254 aa)) enclose the Glutamine amidotransferase type-1 domain. Glycine 351 contacts L-glutamine. Cysteine 378 functions as the Nucleophile; for glutamine hydrolysis in the catalytic mechanism. L-glutamine contacts are provided by residues 379 to 382 (LGMQ), glutamate 402, and arginine 469. Catalysis depends on residues histidine 516 and glutamate 518.

This sequence belongs to the CTP synthase family. In terms of assembly, homotetramer.

The catalysed reaction is UTP + L-glutamine + ATP + H2O = CTP + L-glutamate + ADP + phosphate + 2 H(+). The enzyme catalyses L-glutamine + H2O = L-glutamate + NH4(+). It catalyses the reaction UTP + NH4(+) + ATP = CTP + ADP + phosphate + 2 H(+). It functions in the pathway pyrimidine metabolism; CTP biosynthesis via de novo pathway; CTP from UDP: step 2/2. With respect to regulation, allosterically activated by GTP, when glutamine is the substrate; GTP has no effect on the reaction when ammonia is the substrate. The allosteric effector GTP functions by stabilizing the protein conformation that binds the tetrahedral intermediate(s) formed during glutamine hydrolysis. Inhibited by the product CTP, via allosteric rather than competitive inhibition. In terms of biological role, catalyzes the ATP-dependent amination of UTP to CTP with either L-glutamine or ammonia as the source of nitrogen. Regulates intracellular CTP levels through interactions with the four ribonucleotide triphosphates. The protein is CTP synthase of Thiobacillus denitrificans (strain ATCC 25259 / T1).